The following is a 55-amino-acid chain: Spermatid nuclear transition protein 1 (55 aa).

Over residues 1–42 (MSTSRKLKSQGMRRGKNRTPHKGVKRSGSKRKYRKSSLKSRK) the composition is skewed to basic residues. The interval 1-55 (MSTSRKLKSQGMRRGKNRTPHKGVKRSGSKRKYRKSSLKSRKRCDDANRNLRSHL) is disordered. A phosphoserine mark is found at serine 9, serine 36, serine 37, and serine 40.

This sequence belongs to the nuclear transition protein 1 family. Testis.

It is found in the nucleus. The protein localises to the chromosome. Functionally, plays a key role in the replacement of histones to protamine in the elongating spermatids of mammals. In condensing spermatids, loaded onto the nucleosomes, where it promotes the recruitment and processing of protamines, which are responsible for histone eviction. The sequence is that of Spermatid nuclear transition protein 1 (TNP1) from Bos taurus (Bovine).